The primary structure comprises 248 residues: UDP-2,3-diacylglucosamine hydrolase (248 aa).

Mn(2+)-binding residues include aspartate 7, histidine 9, aspartate 40, asparagine 78, and histidine 113. Substrate is bound at residue 78 to 79 (NR). Residues aspartate 121, serine 159, threonine 163, lysine 166, and histidine 194 each contribute to the substrate site. Positions 194 and 196 each coordinate Mn(2+).

Belongs to the LpxH family. It depends on Mn(2+) as a cofactor.

It localises to the cell inner membrane. The catalysed reaction is UDP-2-N,3-O-bis[(3R)-3-hydroxytetradecanoyl]-alpha-D-glucosamine + H2O = 2-N,3-O-bis[(3R)-3-hydroxytetradecanoyl]-alpha-D-glucosaminyl 1-phosphate + UMP + 2 H(+). It participates in glycolipid biosynthesis; lipid IV(A) biosynthesis; lipid IV(A) from (3R)-3-hydroxytetradecanoyl-[acyl-carrier-protein] and UDP-N-acetyl-alpha-D-glucosamine: step 4/6. Its function is as follows. Hydrolyzes the pyrophosphate bond of UDP-2,3-diacylglucosamine to yield 2,3-diacylglucosamine 1-phosphate (lipid X) and UMP by catalyzing the attack of water at the alpha-P atom. Involved in the biosynthesis of lipid A, a phosphorylated glycolipid that anchors the lipopolysaccharide to the outer membrane of the cell. This chain is UDP-2,3-diacylglucosamine hydrolase, found in Pseudomonas savastanoi pv. phaseolicola (strain 1448A / Race 6) (Pseudomonas syringae pv. phaseolicola (strain 1448A / Race 6)).